A 219-amino-acid polypeptide reads, in one-letter code: Orotate phosphoribosyltransferase (219 aa).

5-phospho-alpha-D-ribose 1-diphosphate is bound at residue Lys-26. 34–35 (FF) lines the orotate pocket. 5-phospho-alpha-D-ribose 1-diphosphate-binding positions include 72–73 (YK), Arg-98, Lys-99, Lys-102, His-104, and 124–132 (DDVITAGTA). Positions 128 and 156 each coordinate orotate.

It belongs to the purine/pyrimidine phosphoribosyltransferase family. PyrE subfamily. In terms of assembly, homodimer. Mg(2+) is required as a cofactor.

It carries out the reaction orotidine 5'-phosphate + diphosphate = orotate + 5-phospho-alpha-D-ribose 1-diphosphate. Its pathway is pyrimidine metabolism; UMP biosynthesis via de novo pathway; UMP from orotate: step 1/2. Catalyzes the transfer of a ribosyl phosphate group from 5-phosphoribose 1-diphosphate to orotate, leading to the formation of orotidine monophosphate (OMP). The chain is Orotate phosphoribosyltransferase from Xanthomonas oryzae pv. oryzae (strain MAFF 311018).